The following is a 249-amino-acid chain: Hydroxyacylglutathione hydrolase (249 aa).

Positions 54, 56, 58, 59, 113, 138, and 176 each coordinate Zn(2+).

The protein belongs to the metallo-beta-lactamase superfamily. Glyoxalase II family. Monomer. Zn(2+) is required as a cofactor.

The catalysed reaction is an S-(2-hydroxyacyl)glutathione + H2O = a 2-hydroxy carboxylate + glutathione + H(+). It functions in the pathway secondary metabolite metabolism; methylglyoxal degradation; (R)-lactate from methylglyoxal: step 2/2. Thiolesterase that catalyzes the hydrolysis of S-D-lactoyl-glutathione to form glutathione and D-lactic acid. In Synechococcus sp. (strain CC9605), this protein is Hydroxyacylglutathione hydrolase.